The primary structure comprises 309 residues: Probable WRKY transcription factor 26 (309 aa).

The interval 1–24 (MGSFDRQRAVPKFKTATPSPLPLS) is disordered. Positions 111 to 176 (SSNKTSDDGY…YKGSHNHPKP (66 aa)) form a DNA-binding region, WRKY 1. 4 residues coordinate Zn(2+): Cys-142, Cys-147, His-171, and His-173. The segment at 167–210 (YKGSHNHPKPQSTKRSSSTAIAAHQNSSNGDGKDIGEDETEAKR) is disordered. Residues 175–196 (KPQSTKRSSSTAIAAHQNSSNG) show a composition bias toward polar residues. The span at 197–210 (DGKDIGEDETEAKR) shows a compositional bias: basic and acidic residues. The segment at residues 228–293 (SDIDILDDGY…YEGKHKHQIP (66 aa)) is a DNA-binding region (WRKY 2). Residues Cys-259, Cys-264, His-288, and His-290 each contribute to the Zn(2+) site.

It belongs to the WRKY group I family. Interacts with VQ10.

It localises to the nucleus. Its function is as follows. Transcription factor. Interacts specifically with the W box (5'-(T)TGAC[CT]-3'), a frequently occurring elicitor-responsive cis-acting element. Functions with WRKY25 and WRKY33 as positive regulator of plant thermotolerance by partially participating in ethylene-response signal transduction pathway. The protein is Probable WRKY transcription factor 26 (WRKY26) of Arabidopsis thaliana (Mouse-ear cress).